The sequence spans 652 residues: Putative ankyrin repeat protein R734 (652 aa).

ANK repeat units lie at residues 77–105, 106–136, 138–167, 192–219, 220–242, 243–274, 307–337, 396–430, 468–498, and 535–564; these read TNDI…ANNS, EGIK…LPTE, TLRD…HLGY, NDLK…SGYE, FDNR…FFMD, IGFD…QFTQ, INDN…NINR, SDNN…DPNY, PKLT…TIYS, and TNKS…DNNL.

This chain is Putative ankyrin repeat protein R734, found in Acanthamoeba polyphaga mimivirus (APMV).